Here is a 110-residue protein sequence, read N- to C-terminus: MGNSKTNGFFTPEKYLYGIIQGLPPTLRGLAFIFFFLVAFYFFPAFWDLCGVLRGARGKGFPKRKSDANSQHSKQFWTHSDFPIWFLRVLIPTRASINSMKYPHTAALVR.

The helical transmembrane segment at 29–49 (GLAFIFFFLVAFYFFPAFWDL) threads the bilayer.

The protein localises to the membrane. This is an uncharacterized protein from Saccharomyces cerevisiae (strain ATCC 204508 / S288c) (Baker's yeast).